The chain runs to 745 residues: MSTPTSNESTSSSSNNSDQRVLFPDIQRDDIQVGDHIGVGTFGAVFSGNWTLPDGSQRTIALKKVFVLEKEAEILSKIRHKNIIQFYGICKATGNDFFIVTEYAEKGSLYDFIHSEESQSFASSSGGNSFDVVVKWASQIASGIQYLHYDAVDTIIHRDLKSKNVVLDKNLVCKICDFGTSKDLTHSCTAPSWGGTAAWMSPEMILQSEGLTTATDVWSYGVVLWEILSKEVPYKDYSEFRIFTMITQSGITLAIPPSCPAPLKQLMSNCWKMTPKDRANMRQIQGELNRLAGNQKVMDECEKFMGLEDWKTEIEKQEKNVEKMRKDLEKRREQLEIREKALKQRMKVEQAVLDSARHPPEDVHQWSEHHTSHWVETVLGRVANDKKFLDRVNAAVFRNRITGARLLGMTQNDLEHLGVHKVGSRIELMKMIRKLADTQKALHNFPTLEQAKRIEMTLKTEKEAAGQLANDVDIVIIVGMYVRKMNATRRKFKFYADSDWIDDTDIPAKSKSKHASSLIKTVCFSVLDENTKKPINEPACSISSGMTTNPDWITVDTEDDVKIRVIVSVYYADIVTQPRNTEVIKVVTSLEESKILEERHVHLRLRRSSSSASISTPSPVIAPVYHPFGHLNNGFHHTTSSPQLRGFWHRKQTGMNRHGLTETELSSLQEQLRTPSPDKKVVDENVIIHVPKLTRRRRTTTTNSEDTEKSDTNNKTPESQARRVHVHGGKDKWNWKKGKSRPKFT.

One can recognise a Protein kinase domain in the interval 31–305 (IQVGDHIGVG…KVMDECEKFM (275 aa)). Residues 37–45 (IGVGTFGAV) and lysine 63 contribute to the ATP site. Aspartate 159 functions as the Proton acceptor in the catalytic mechanism. A coiled-coil region spans residues 307 to 352 (LEDWKTEIEKQEKNVEKMRKDLEKRREQLEIREKALKQRMKVEQAV). The SAM domain maps to 366-438 (WSEHHTSHWV…MKMIRKLADT (73 aa)). The disordered stretch occupies residues 693-745 (LTRRRRTTTTNSEDTEKSDTNNKTPESQARRVHVHGGKDKWNWKKGKSRPKFT). A compositionally biased stretch (basic residues) spans 735–745 (WKKGKSRPKFT).

It belongs to the protein kinase superfamily. STE Ser/Thr protein kinase family. MAP kinase kinase kinase subfamily. Requires Mg(2+) as cofactor. In terms of tissue distribution, widely expressed; expressed in most tissues, including intestines, muscle and the nervous system.

The protein resides in the cytoplasm. It localises to the nucleus. The catalysed reaction is L-seryl-[protein] + ATP = O-phospho-L-seryl-[protein] + ADP + H(+). The enzyme catalyses L-threonyl-[protein] + ATP = O-phospho-L-threonyl-[protein] + ADP + H(+). Functionally, stress-activated component of a protein kinase signal transduction cascade that promotes programmed cell death in response to ribotoxic stress. Acts as the proximal sensor of ribotoxic stress: directly binds to the ribosome, thereby acting as a sentinel for colliding ribosomes. Upon ribosome collisions, activates the stress-activated protein kinase signal transduction cascade, leading to programmed cell death. Acts by catalyzing phosphorylation of MAP kinase kinases, leading to activation of the JNK and MAP kinase p38 pathways. This Caenorhabditis elegans protein is Mitogen-activated protein kinase kinase kinase zak-1.